Consider the following 413-residue polypeptide: Serine hydroxymethyltransferase (413 aa).

Residues L120 and 124–126 contribute to the (6S)-5,6,7,8-tetrahydrofolate site; that span reads GHL. N6-(pyridoxal phosphate)lysine is present on K229. 352–354 contacts (6S)-5,6,7,8-tetrahydrofolate; that stretch reads SPF.

It belongs to the SHMT family. Homodimer. The cofactor is pyridoxal 5'-phosphate.

The protein resides in the cytoplasm. The enzyme catalyses (6R)-5,10-methylene-5,6,7,8-tetrahydrofolate + glycine + H2O = (6S)-5,6,7,8-tetrahydrofolate + L-serine. It functions in the pathway one-carbon metabolism; tetrahydrofolate interconversion. The protein operates within amino-acid biosynthesis; glycine biosynthesis; glycine from L-serine: step 1/1. Catalyzes the reversible interconversion of serine and glycine with tetrahydrofolate (THF) serving as the one-carbon carrier. This reaction serves as the major source of one-carbon groups required for the biosynthesis of purines, thymidylate, methionine, and other important biomolecules. Also exhibits THF-independent aldolase activity toward beta-hydroxyamino acids, producing glycine and aldehydes, via a retro-aldol mechanism. This Heliobacterium modesticaldum (strain ATCC 51547 / Ice1) protein is Serine hydroxymethyltransferase.